Reading from the N-terminus, the 506-residue chain is Galactose/methyl galactoside import ATP-binding protein MglA (506 aa).

ABC transporter domains lie at 14–249 (LEMS…VGRS) and 264–506 (VILE…SLHL). 46-53 (GENGAGKS) contributes to the ATP binding site.

It belongs to the ABC transporter superfamily. Galactose/methyl galactoside importer (TC 3.A.1.2.3) family. In terms of assembly, the complex is composed of one ATP-binding protein (MglA), two transmembrane proteins (MglC) and a solute-binding protein (MglB).

The protein localises to the cell inner membrane. The enzyme catalyses D-galactose(out) + ATP + H2O = D-galactose(in) + ADP + phosphate + H(+). It catalyses the reaction methyl beta-D-galactoside(out) + ATP + H2O = methyl beta-D-galactoside(in) + ADP + phosphate + H(+). Its function is as follows. Part of the ABC transporter complex MglABC involved in galactose/methyl galactoside import. Responsible for energy coupling to the transport system. In Escherichia coli O157:H7, this protein is Galactose/methyl galactoside import ATP-binding protein MglA.